A 352-amino-acid chain; its full sequence is tRNA-specific 2-thiouridylase MnmA (352 aa).

Residues 7–14 (GLSGGVDS) and Leu33 contribute to the ATP site. Cys94 (nucleophile) is an active-site residue. Cys94 and Cys193 are disulfide-bonded. ATP is bound at residue Gly119. Residues 143–145 (KDQ) form an interaction with tRNA region. Cys193 (cysteine persulfide intermediate) is an active-site residue. The interval 298–299 (RY) is interaction with tRNA.

This sequence belongs to the MnmA/TRMU family.

The protein localises to the cytoplasm. The catalysed reaction is S-sulfanyl-L-cysteinyl-[protein] + uridine(34) in tRNA + AH2 + ATP = 2-thiouridine(34) in tRNA + L-cysteinyl-[protein] + A + AMP + diphosphate + H(+). Catalyzes the 2-thiolation of uridine at the wobble position (U34) of tRNA, leading to the formation of s(2)U34. In Trichormus variabilis (strain ATCC 29413 / PCC 7937) (Anabaena variabilis), this protein is tRNA-specific 2-thiouridylase MnmA.